The primary structure comprises 652 residues: Probable export ATP-binding/permease protein PFL_2149 (652 aa).

The 239-residue stretch at 6 to 244 folds into the ABC transporter domain; that stretch reads LHLTGISRSF…APSEPPVSVR (239 aa). 42 to 49 lines the ATP pocket; that stretch reads GASGSGKS. 5 consecutive transmembrane segments (helical) span residues 251-271, 277-297, 525-545, 586-606, and 615-635; these read LVAS…ALVS, LLTM…VAIG, LALL…IGVM, IGGA…TLFI, and MGSI…FGFV.

Belongs to the ABC transporter superfamily. Macrolide exporter (TC 3.A.1.122) family. As to quaternary structure, probably part of a tripartite efflux system, which is composed of an inner membrane transporter, a periplasmic membrane fusion protein, and an outer membrane component.

Its subcellular location is the cell inner membrane. Probably part of a tripartite efflux system. The chain is Probable export ATP-binding/permease protein PFL_2149 from Pseudomonas fluorescens (strain ATCC BAA-477 / NRRL B-23932 / Pf-5).